We begin with the raw amino-acid sequence, 310 residues long: METHFHEWQKSLQLIQQKSEELQREQIQLKSFERELRIINKWFYYGLHYEQKLQLARHPKRPTSLDYIEGMSQDWIELHGDRKGSDDQALITGIAQVEDETIVFLAHQKGRNTKENLQRNFGMPSPGGYRKALRIMNHANKFGLPLVTLIDTPGAWAGVEAEKEGQAHAIATCLQTMFSLEVPMISVIIGEGGSGGALAIGVSNWMMMLEHAVYTVATPEACAAILWKDASKSAEAAEALKIGAEDLLALGVIDEIIPEPIGCAHQDAASMTKRLKQKILRRLKQLKILSGKQLRAHRAERFRHLGYYVE.

A CoA carboxyltransferase C-terminal domain is found at 31-285 (SFERELRIIN…KQKILRRLKQ (255 aa)).

The protein belongs to the AccA family. In terms of assembly, acetyl-CoA carboxylase is a heterohexamer composed of biotin carboxyl carrier protein (accB), biotin carboxylase (accC) and two subunits each of ACCase subunit alpha (accA) and ACCase subunit beta (accD).

Its subcellular location is the plastid. The protein resides in the chloroplast. It carries out the reaction N(6)-carboxybiotinyl-L-lysyl-[protein] + acetyl-CoA = N(6)-biotinyl-L-lysyl-[protein] + malonyl-CoA. Its pathway is lipid metabolism; malonyl-CoA biosynthesis; malonyl-CoA from acetyl-CoA: step 1/1. In terms of biological role, component of the acetyl coenzyme A carboxylase (ACC) complex. First, biotin carboxylase catalyzes the carboxylation of biotin on its carrier protein (BCCP) and then the CO(2) group is transferred by the carboxyltransferase to acetyl-CoA to form malonyl-CoA. The chain is Acetyl-coenzyme A carboxylase carboxyl transferase subunit alpha from Cyanidioschyzon merolae (strain NIES-3377 / 10D) (Unicellular red alga).